A 167-amino-acid polypeptide reads, in one-letter code: Translationally-controlled tumor protein homolog (167 aa).

The TCTP domain occupies 1 to 167; that stretch reads MLIFEDVISG…WKHGVKENKI (167 aa).

It belongs to the TCTP family.

Its subcellular location is the cytoplasm. The protein localises to the cytoskeleton. Functionally, involved in protein synthesis. Involved in microtubule stabilization. This chain is Translationally-controlled tumor protein homolog (TMA19), found in Candida albicans (strain SC5314 / ATCC MYA-2876) (Yeast).